Here is a 736-residue protein sequence, read N- to C-terminus: Exo-oligoalginate lyase (736 aa).

Residues 1–23 form the signal peptide; the sequence is MLSVNTIKNTLLAAVLVSVPATA. Residues lysine 136, 146–149, lysine 198, histidine 202, and 257–260 contribute to the substrate site; these read QSLN and YYQR. The active-site Proton donor is the tyrosine 258. Histidine 413 acts as the Proton acceptor in catalysis. Residues histidine 415 and aspartate 433 each contribute to the Zn(2+) site. Arginine 438 serves as a coordination point for substrate. Position 464 (histidine 464) interacts with Zn(2+). Glutamate 667 contributes to the substrate binding site.

This sequence belongs to the polysaccharide lyase 17 family. As to quaternary structure, homodimer. The cofactor is Zn(2+).

The protein resides in the periplasm. The enzyme catalyses Cleavage of 4-deoxy-alpha-L-erythro-hex-4-enopyranuronoside oligosaccharides into 4-deoxy-alpha-L-erythro-hex-4-enopyranuronate monosaccharides.. Catalyzes the depolymerization of alginate through an exolytic mode of action, via a beta-elimination mechanism. Preferentially acts on oligoalginates with degrees of polymerization higher than 2 to produce the alginate monomer, 4-deoxy-L-erythro-5-hexoseulose uronic acid. This is Exo-oligoalginate lyase from Saccharophagus degradans (strain 2-40 / ATCC 43961 / DSM 17024).